The chain runs to 212 residues: uncharacterized protein (212 aa).

Catalysis depends on Cys-52, which acts as the Acyl-thioester intermediate. Active-site residues include His-89 and Asp-104.

The protein belongs to the arylamine N-acetyltransferase family.

This is an uncharacterized protein from Acanthamoeba polyphaga (Amoeba).